The sequence spans 222 residues: MGSPFILLNYKTYNQGTGQGAVEIARACRAVSEESGIEIAVAPQLPDIYRVASEVELPIFSQHMDGVGAGSFTGHVFGKCIKEAGAVGTLINHSERRLTLAEIEASLKAAKEFGLRAVICTNNVPTTAAAAALEPDYVAIEPPELIGSGIPVSKADPEVVSGSVEAVAKINSGVKVLCGAGISKGEDLRAALDLGSQGVLLASGIVKAADPKAALEDLIRLV.

9-11 (NYK) is a substrate binding site. The Electrophile role is filled by His93. Glu141 functions as the Proton acceptor in the catalytic mechanism. Substrate is bound by residues Ile146, Gly181, and 202–203 (AS).

Belongs to the triosephosphate isomerase family. In terms of assembly, homotetramer; dimer of dimers.

Its subcellular location is the cytoplasm. The catalysed reaction is D-glyceraldehyde 3-phosphate = dihydroxyacetone phosphate. Its pathway is carbohydrate biosynthesis; gluconeogenesis. It functions in the pathway carbohydrate degradation; glycolysis; D-glyceraldehyde 3-phosphate from glycerone phosphate: step 1/1. Functionally, involved in the gluconeogenesis. Catalyzes stereospecifically the conversion of dihydroxyacetone phosphate (DHAP) to D-glyceraldehyde-3-phosphate (G3P). The polypeptide is Triosephosphate isomerase (Methanosarcina acetivorans (strain ATCC 35395 / DSM 2834 / JCM 12185 / C2A)).